The chain runs to 227 residues: Phosphatidylserine decarboxylase proenzyme (227 aa).

The active-site Schiff-base intermediate with substrate; via pyruvic acid is Ser181. At Ser181 the chain carries Pyruvic acid (Ser); by autocatalysis.

The protein belongs to the phosphatidylserine decarboxylase family. PSD-A subfamily. Heterodimer of a large membrane-associated beta subunit and a small pyruvoyl-containing alpha subunit. Requires pyruvate as cofactor. Post-translationally, is synthesized initially as an inactive proenzyme. Formation of the active enzyme involves a self-maturation process in which the active site pyruvoyl group is generated from an internal serine residue via an autocatalytic post-translational modification. Two non-identical subunits are generated from the proenzyme in this reaction, and the pyruvate is formed at the N-terminus of the alpha chain, which is derived from the carboxyl end of the proenzyme. The post-translation cleavage follows an unusual pathway, termed non-hydrolytic serinolysis, in which the side chain hydroxyl group of the serine supplies its oxygen atom to form the C-terminus of the beta chain, while the remainder of the serine residue undergoes an oxidative deamination to produce ammonia and the pyruvoyl prosthetic group on the alpha chain.

The protein localises to the cell membrane. It catalyses the reaction a 1,2-diacyl-sn-glycero-3-phospho-L-serine + H(+) = a 1,2-diacyl-sn-glycero-3-phosphoethanolamine + CO2. The protein operates within phospholipid metabolism; phosphatidylethanolamine biosynthesis; phosphatidylethanolamine from CDP-diacylglycerol: step 2/2. In terms of biological role, catalyzes the formation of phosphatidylethanolamine (PtdEtn) from phosphatidylserine (PtdSer). This chain is Phosphatidylserine decarboxylase proenzyme, found in Anaplasma phagocytophilum (strain HZ).